The sequence spans 353 residues: Methylthioribose-1-phosphate isomerase (353 aa).

Substrate contacts are provided by residues 48–50, arginine 94, and glutamine 201; that span reads RGA. Aspartate 242 acts as the Proton donor in catalysis. 252–253 serves as a coordination point for substrate; it reads NK.

Belongs to the eIF-2B alpha/beta/delta subunits family. MtnA subfamily.

The enzyme catalyses 5-(methylsulfanyl)-alpha-D-ribose 1-phosphate = 5-(methylsulfanyl)-D-ribulose 1-phosphate. The protein operates within amino-acid biosynthesis; L-methionine biosynthesis via salvage pathway; L-methionine from S-methyl-5-thio-alpha-D-ribose 1-phosphate: step 1/6. In terms of biological role, catalyzes the interconversion of methylthioribose-1-phosphate (MTR-1-P) into methylthioribulose-1-phosphate (MTRu-1-P). This chain is Methylthioribose-1-phosphate isomerase, found in Roseiflexus sp. (strain RS-1).